A 26-amino-acid polypeptide reads, in one-letter code: Muscarinic toxin-like protein 1 (26 aa).

This sequence belongs to the three-finger toxin family. Short-chain subfamily. Orphan group VIII (haditoxin) sub-subfamily. Homodimer; non-covalently linked. In terms of tissue distribution, expressed by the venom gland.

The protein localises to the secreted. Its function is as follows. Antagonist of muscle and neuronal nicotinic acetylcholine receptors (nAChR) with highest affinity for neuronal alpha-7/CHRNA7 nAChRs. This Naja naja (Indian cobra) protein is Muscarinic toxin-like protein 1.